Consider the following 376-residue polypeptide: Succinyl-diaminopimelate desuccinylase (376 aa).

His66 lines the Zn(2+) pocket. Residue Asp68 is part of the active site. Asp99 lines the Zn(2+) pocket. Glu133 acts as the Proton acceptor in catalysis. Glu134, Glu162, and His348 together coordinate Zn(2+).

Belongs to the peptidase M20A family. DapE subfamily. In terms of assembly, homodimer. It depends on Zn(2+) as a cofactor. Co(2+) is required as a cofactor.

It carries out the reaction N-succinyl-(2S,6S)-2,6-diaminopimelate + H2O = (2S,6S)-2,6-diaminopimelate + succinate. The protein operates within amino-acid biosynthesis; L-lysine biosynthesis via DAP pathway; LL-2,6-diaminopimelate from (S)-tetrahydrodipicolinate (succinylase route): step 3/3. Functionally, catalyzes the hydrolysis of N-succinyl-L,L-diaminopimelic acid (SDAP), forming succinate and LL-2,6-diaminopimelate (DAP), an intermediate involved in the bacterial biosynthesis of lysine and meso-diaminopimelic acid, an essential component of bacterial cell walls. This Nitrosococcus oceani (strain ATCC 19707 / BCRC 17464 / JCM 30415 / NCIMB 11848 / C-107) protein is Succinyl-diaminopimelate desuccinylase.